We begin with the raw amino-acid sequence, 87 residues long: Small ribosomal subunit protein bS20 (87 aa).

Residues Met1–Thr26 are disordered.

Belongs to the bacterial ribosomal protein bS20 family.

Its function is as follows. Binds directly to 16S ribosomal RNA. This chain is Small ribosomal subunit protein bS20, found in Nitratidesulfovibrio vulgaris (strain DSM 19637 / Miyazaki F) (Desulfovibrio vulgaris).